A 249-amino-acid chain; its full sequence is Orotidine 5'-phosphate decarboxylase (249 aa).

Residues Asp-21, Lys-43, 72–81, Thr-128, Arg-193, Gln-204, Gly-224, and Arg-225 contribute to the substrate site; that span reads DLKLYDIPET. Lys-74 functions as the Proton donor in the catalytic mechanism.

Belongs to the OMP decarboxylase family. Type 1 subfamily. Homodimer.

It carries out the reaction orotidine 5'-phosphate + H(+) = UMP + CO2. It functions in the pathway pyrimidine metabolism; UMP biosynthesis via de novo pathway; UMP from orotate: step 2/2. Functionally, catalyzes the decarboxylation of orotidine 5'-monophosphate (OMP) to uridine 5'-monophosphate (UMP). This chain is Orotidine 5'-phosphate decarboxylase, found in Desulfosudis oleivorans (strain DSM 6200 / JCM 39069 / Hxd3) (Desulfococcus oleovorans).